A 286-amino-acid polypeptide reads, in one-letter code: Beta-lactamase SHV-2 (286 aa).

The N-terminal stretch at 1–21 is a signal peptide; that stretch reads MRYIRLCIISLLATLPLAVHA. The active-site Acyl-ester intermediate is serine 66. An intrachain disulfide couples cysteine 73 to cysteine 119. The active-site Proton acceptor is glutamate 164. 230–232 is a substrate binding site; that stretch reads KTG.

The protein belongs to the class-A beta-lactamase family.

The enzyme catalyses a beta-lactam + H2O = a substituted beta-amino acid. Its function is as follows. This enzyme hydrolyzes cefotaxime, ceftazidime and other broad spectrum cephalosporins. This is Beta-lactamase SHV-2 (bla) from Escherichia coli.